Reading from the N-terminus, the 238-residue chain is ATP synthase subunit a (238 aa).

4 helical membrane passes run leucine 17–cysteine 37, isoleucine 80–isoleucine 100, aspartate 112–isoleucine 132, and isoleucine 194–isoleucine 214.

It belongs to the ATPase A chain family. F-type ATPases have 2 components, CF(1) - the catalytic core - and CF(0) - the membrane proton channel. CF(1) has five subunits: alpha(3), beta(3), gamma(1), delta(1), epsilon(1). CF(0) has three main subunits: a(1), b(2) and c(9-12). The alpha and beta chains form an alternating ring which encloses part of the gamma chain. CF(1) is attached to CF(0) by a central stalk formed by the gamma and epsilon chains, while a peripheral stalk is formed by the delta and b chains.

The protein resides in the cell membrane. Key component of the proton channel; it plays a direct role in the translocation of protons across the membrane. This Listeria welshimeri serovar 6b (strain ATCC 35897 / DSM 20650 / CCUG 15529 / CIP 8149 / NCTC 11857 / SLCC 5334 / V8) protein is ATP synthase subunit a.